Consider the following 612-residue polypeptide: UvrABC system protein C (612 aa).

The 79-residue stretch at 20–98 (THSGVYRMLD…IKQHRPKYNI (79 aa)) folds into the GIY-YIG domain. Residues 208 to 243 (SSVLEEISAKMYQASEDMEYEKAQVYRDQLVVLRKL) form the UVR domain.

The protein belongs to the UvrC family. As to quaternary structure, interacts with UvrB in an incision complex.

The protein localises to the cytoplasm. In terms of biological role, the UvrABC repair system catalyzes the recognition and processing of DNA lesions. UvrC both incises the 5' and 3' sides of the lesion. The N-terminal half is responsible for the 3' incision and the C-terminal half is responsible for the 5' incision. The sequence is that of UvrABC system protein C from Francisella tularensis subsp. holarctica (strain FTNF002-00 / FTA).